The primary structure comprises 90 residues: Conotoxin TxMMSK-06 (90 aa).

Residues 1-22 (MMSKLGVLLTICLLLFPHTAVP) form the signal peptide. Positions 23–74 (LDGDQHADQPAERLQDDISSEHHPMLNSIRRREQNQFMSFTSVKLRDSRGER) are excised as a propeptide. The segment at 24 to 43 (DGDQHADQPAERLQDDISSE) is disordered. Over residues 25-43 (GDQHADQPAERLQDDISSE) the composition is skewed to basic and acidic residues. 3 disulfide bridges follow: C75–C89, C76–C85, and C81–C88. P87 bears the 4-hydroxyproline mark. C89 is subject to Cysteine amide.

It belongs to the conotoxin M superfamily. In terms of tissue distribution, expressed by the venom duct.

The protein localises to the secreted. This is Conotoxin TxMMSK-06 from Conus textile (Cloth-of-gold cone).